Consider the following 253-residue polypeptide: MSTIGTGYDLSASQFSPDGRVFQIDYASKAVEKSGTVIGIRGKDAVVLAVEKIITSKLYEPDAGGRIFTIEKNIGMAVAGLVADGNFVADIARQEAANYRQQFEQAIPLKHLCHRVAGYVHAYTLYSAVRPFGLSIILASWDEVEGPQLYKIEPSGSSFGYFACASGKAKQLAKTEMEKLKMDMRTDELVESAGEIIYKVHDELKDKDFRFEMGLVGRVTGGLHLINPSELTEKARKAGDAANKDEDSDNETH.

A disordered region spans residues 230–253 (ELTEKARKAGDAANKDEDSDNETH). A compositionally biased stretch (basic and acidic residues) spans 231–253 (LTEKARKAGDAANKDEDSDNETH). Position 248 is a phosphoserine (Ser248).

Belongs to the peptidase T1A family. As to quaternary structure, the 26S proteasome consists of a 20S proteasome core and two 19S regulatory subunits. The 20S proteasome core is composed of 28 subunits that are arranged in four stacked rings, resulting in a barrel-shaped structure. The two end rings are each formed by seven alpha subunits, and the two central rings are each formed by seven beta subunits. The catalytic chamber with the active sites is on the inside of the barrel. Interacts with ntc.

The protein localises to the cytoplasm. It localises to the nucleus. The proteasome is a multicatalytic proteinase complex which is characterized by its ability to cleave peptides with Arg, Phe, Tyr, Leu, and Glu adjacent to the leaving group at neutral or slightly basic pH. The proteasome has an ATP-dependent proteolytic activity. This Drosophila melanogaster (Fruit fly) protein is Proteasome subunit alpha type-3 (Prosalpha7).